The primary structure comprises 911 residues: Nitrate reductase [NADH] (911 aa).

The segment covering 1-10 (MAASVENRQY) has biased composition (polar residues). The segment at 1–71 (MAASVENRQY…SEDEDDDDEK (71 aa)) is disordered. The span at 61-71 (SSEDEDDDDEK) shows a compositional bias: acidic residues. Cys188 is a binding site for Mo-molybdopterin. Residues 536-611 (SKMYSMSEVR…LEDFRIGELI (76 aa)) form the Cytochrome b5 heme-binding domain. Positions 571 and 594 each coordinate heme. The region spanning 654-766 (REKIPCKLVD…KGPLGHIEYQ (113 aa)) is the FAD-binding FR-type domain. Residues 706–709 (RAYT), 723–727 (VVKIY), Phe728, Phe735, 740–742 (QMS), and Thr793 contribute to the FAD site.

This sequence belongs to the nitrate reductase family. In terms of assembly, homodimer. The cofactor is FAD. Requires heme as cofactor. Mo-molybdopterin serves as cofactor.

The enzyme catalyses nitrite + NAD(+) + H2O = nitrate + NADH + H(+). Nitrate reductase is a key enzyme involved in the first step of nitrate assimilation in plants, fungi and bacteria. In Solanum lycopersicum (Tomato), this protein is Nitrate reductase [NADH] (NIA).